Here is a 431-residue protein sequence, read N- to C-terminus: MSLMTKLGFRALVASCLITAGSAANAQVNVLITGVGSTQFPIATANFTNEANLPQQITSIVRADLARSGKFTNIDAGSTPVPETASVDLGAWKAKGANAFVAGSVNRDANGQYKVNFILYDTVKQQSLGGLSLTATDTTLRTAGHKIADYIYQKLLGVRGVFATRLSYVIKTGNRYQLQISDSDGQNARIALSSTEPIISPAWSPSGTKVAYVSFERKKPIVYIHDLPTGRRYMVSDQKGNNSAPAWSPDSNTLAVALSLTGNTQIYTVNANGGGLRRLTQSSSIDTEPFYSPDGRWIYFTSDRGGAPQIYRMPAQGESAGAAQRVTFTGSYNTSPRVSPDGKLLAYISRTGGGFKLYVQDLQTGAANAITNTNRDESPSFAANGQYLLYATQSGGRNVLAAVPSDGSAPPQILSVQGGSVREPSWGPFMQ.

The N-terminal stretch at 1 to 26 (MSLMTKLGFRALVASCLITAGSAANA) is a signal peptide. The segment at 406 to 431 (DGSAPPQILSVQGGSVREPSWGPFMQ) is disordered.

It belongs to the TolB family. In terms of assembly, the Tol-Pal system is composed of five core proteins: the inner membrane proteins TolA, TolQ and TolR, the periplasmic protein TolB and the outer membrane protein Pal. They form a network linking the inner and outer membranes and the peptidoglycan layer.

Its subcellular location is the periplasm. Its function is as follows. Part of the Tol-Pal system, which plays a role in outer membrane invagination during cell division and is important for maintaining outer membrane integrity. The polypeptide is Tol-Pal system protein TolB (Burkholderia orbicola (strain MC0-3)).